A 115-amino-acid chain; its full sequence is NADH-ubiquinone oxidoreductase chain 3 (115 aa).

3 consecutive transmembrane segments (helical) span residues 4 to 24, 55 to 75, and 87 to 107; these read LLVL…AFWL, FFLV…LLPL, and MTLT…YEWL.

This sequence belongs to the complex I subunit 3 family. Core subunit of respiratory chain NADH dehydrogenase (Complex I) which is composed of 45 different subunits. Interacts with TMEM186. Interacts with TMEM242.

It is found in the mitochondrion inner membrane. The catalysed reaction is a ubiquinone + NADH + 5 H(+)(in) = a ubiquinol + NAD(+) + 4 H(+)(out). In terms of biological role, core subunit of the mitochondrial membrane respiratory chain NADH dehydrogenase (Complex I) which catalyzes electron transfer from NADH through the respiratory chain, using ubiquinone as an electron acceptor. Essential for the catalytic activity of complex I. The sequence is that of NADH-ubiquinone oxidoreductase chain 3 from Peromyscus eremicus (Cactus mouse).